A 744-amino-acid polypeptide reads, in one-letter code: Polyadenylate-binding protein, cytoplasmic and nuclear (744 aa).

Residues 1 to 11 (MSEVANSTSPV) show a composition bias toward polar residues. A disordered region spans residues 1–42 (MSEVANSTSPVQDGADANGAQINTNVPAASGDAPTPTTAAQQ). Residues 33-42 (APTPTTAAQQ) are compositionally biased toward low complexity. RRM domains follow at residues 48–126 (ASLY…WSQR), 136–213 (GNVF…HHIP), 229–306 (TNIY…RAQK), and 332–462 (VNLY…LAQR). Disordered regions lie at residues 368–411 (EEKK…AGDK), 527–550 (GRGA…NAQQ), 607–651 (IAGG…PGVD), and 723–744 (VKNK…EEKA). Over residues 376-397 (KEVKEEKKEDEKKEDEEAKEGS) the composition is skewed to basic and acidic residues. Composition is skewed to gly residues over residues 527-545 (GRGA…GRGG), 609-632 (GGPG…GGRG), and 640-649 (PQGGRPGGPG). The PABC domain occupies 647-724 (GPGVDMSVLS…AMSVYDEYVK (78 aa)).

The protein belongs to the polyadenylate-binding protein type-1 family.

The protein localises to the cytoplasm. It localises to the nucleus. In terms of biological role, binds the poly(A) tail of mRNA. Appears to be an important mediator of the multiple roles of the poly(A) tail in mRNA biogenesis, stability and translation. In the nucleus, involved in both mRNA cleavage and polyadenylation. Is also required for efficient mRNA export to the cytoplasm. Acts in concert with a poly(A)-specific nuclease (PAN) to affect poly(A) tail shortening, which may occur concomitantly with either nucleocytoplasmic mRNA transport or translational initiation. In the cytoplasm, stimulates translation initiation and regulates mRNA decay through translation termination-coupled poly(A) shortening, probably mediated by PAN. The sequence is that of Polyadenylate-binding protein, cytoplasmic and nuclear (PAB1) from Phaeosphaeria nodorum (strain SN15 / ATCC MYA-4574 / FGSC 10173) (Glume blotch fungus).